The chain runs to 147 residues: ATP synthase epsilon chain 2 (147 aa).

This sequence belongs to the ATPase epsilon chain family. In terms of assembly, F-type ATPases have 2 components, CF(1) - the catalytic core - and CF(0) - the membrane proton channel. CF(1) has five subunits: alpha(3), beta(3), gamma(1), delta(1), epsilon(1). CF(0) has three main subunits: a, b and c.

Its subcellular location is the cell inner membrane. Its function is as follows. Produces ATP from ADP in the presence of a proton gradient across the membrane. The sequence is that of ATP synthase epsilon chain 2 from Photobacterium profundum (strain SS9).